Here is a 100-residue protein sequence, read N- to C-terminus: Urease subunit gamma (100 aa).

The protein belongs to the urease gamma subunit family. As to quaternary structure, heterotrimer of UreA (gamma), UreB (beta) and UreC (alpha) subunits. Three heterotrimers associate to form the active enzyme.

It is found in the cytoplasm. The catalysed reaction is urea + 2 H2O + H(+) = hydrogencarbonate + 2 NH4(+). It functions in the pathway nitrogen metabolism; urea degradation; CO(2) and NH(3) from urea (urease route): step 1/1. In Enterobacter sp. (strain 638), this protein is Urease subunit gamma.